A 533-amino-acid chain; its full sequence is MQATVPWLSLSILVPIVGALLVPLVPDKGEGKQVRWYALIVTLITFLITVAAYLTGYDPSLSGLQLSERVSWLPDLGLTWAVGADGLSMPLILLTSFITSLACLAAWPVSFKPRLFYFLLLAMDGGQIAVFAVQDMLLFFLAWELELIPVYLLLAIWGGKKRQYAATKFILYTAGSSLFILLAALAMGFFGGGTPSFEYTALAAKDFGTGFQLLCYAGLLIAFGVKLPIVPLHTWLPDAHGEATAPVHMLLAGILLKMGGYALLRFNCELLPAAHSQFAPLLIVLGVVNIIYAALTSFAQRNLKRKIAYSSISHMGFVLIGVGSFSALGTSGAMLQMISHGLIGASLFFLVGATYDRTHTLQLDEMGGIGQKMRIMFALWTVCALASLALPGMSGFVSELMVFAGFATDEAYTLPFRVVICGLAAVGVILTPIYLLSMLREIFFGKEKEELVSHTNLVDAEPREVYIIGCLLVPIIGIGLYPKLMTDSYRSSIEALVSRNLGAMEQVISPTAPLIRGQAPVPAIIQAPAVGAS.

Helical transmembrane passes span 5 to 25 (VPWLSLSILVPIVGALLVPLV), 36 to 56 (WYALIVTLITFLITVAAYLTG), 70 to 90 (VSWLPDLGLTWAVGADGLSMP), 91 to 111 (LILLTSFITSLACLAAWPVSF), 115 to 135 (LFYFLLLAMDGGQIAVFAVQD), 137 to 157 (LLFFLAWELELIPVYLLLAIW), 169 to 189 (FILYTAGSSLFILLAALAMGF), 210 to 230 (GFQLLCYAGLLIAFGVKLPIV), 244 to 264 (TAPVHMLLAGILLKMGGYALL), 278 to 298 (FAPLLIVLGVVNIIYAALTSF), 315 to 335 (MGFVLIGVGSFSALGTSGAML), 336 to 356 (QMISHGLIGASLFFLVGATYD), 377 to 397 (FALWTVCALASLALPGMSGFV), 418 to 438 (VVICGLAAVGVILTPIYLLSM), and 465 to 485 (VYIIGCLLVPIIGIGLYPKLM).

It belongs to the complex I subunit 4 family.

The protein localises to the cellular thylakoid membrane. The enzyme catalyses a plastoquinone + NADH + (n+1) H(+)(in) = a plastoquinol + NAD(+) + n H(+)(out). The catalysed reaction is a plastoquinone + NADPH + (n+1) H(+)(in) = a plastoquinol + NADP(+) + n H(+)(out). Functionally, NDH-1 shuttles electrons from NAD(P)H, via FMN and iron-sulfur (Fe-S) centers, to quinones in the respiratory chain. The immediate electron acceptor for the enzyme in this species is believed to be plastoquinone. Couples the redox reaction to proton translocation (for every two electrons transferred, four hydrogen ions are translocated across the cytoplasmic membrane), and thus conserves the redox energy in a proton gradient. The sequence is that of NAD(P)H-quinone oxidoreductase chain 4 from Synechococcus sp. (strain CC9605).